Reading from the N-terminus, the 371-residue chain is Deoxyhypusine synthase (371 aa).

NAD(+)-binding positions include 107–111, 133–135, Glu-139, and Asp-240; these read SNLIS and TTG. Residue 138–139 coordinates spermidine; that stretch reads EE. Residue Asp-245 participates in spermidine binding. Gly-287 contributes to the NAD(+) binding site. Position 292 (His-292) interacts with spermidine. Position 312–313 (312–313) interacts with NAD(+); it reads TA. Spermidine contacts are provided by residues 318-320 and 327-333; these read GSD and EAVSWGK. Catalysis depends on Lys-333, which acts as the Nucleophile. Residue 346 to 347 participates in NAD(+) binding; that stretch reads DA.

This sequence belongs to the deoxyhypusine synthase family. Requires NAD(+) as cofactor. In terms of tissue distribution, expressed in shoot tips.

The catalysed reaction is [eIF5A protein]-L-lysine + spermidine = [eIF5A protein]-deoxyhypusine + propane-1,3-diamine. The protein operates within protein modification; eIF5A hypusination. Functionally, catalyzes the NAD-dependent oxidative cleavage of spermidine and the subsequent transfer of the butylamine moiety of spermidine to the epsilon-amino group of a specific lysine residue of the eIF-5A precursor protein to form the intermediate deoxyhypusine residue. Also able to produce homospermidine from putrescine. This Senecio vernalis (Spring groundsel) protein is Deoxyhypusine synthase (DHS1).